The chain runs to 610 residues: tRNA uridine 5-carboxymethylaminomethyl modification enzyme MnmG (610 aa).

14 to 19 (GAGHAG) contacts FAD. An NAD(+)-binding site is contributed by 274–288 (GPRYCPSIEDKIVKF).

Belongs to the MnmG family. In terms of assembly, homodimer. Heterotetramer of two MnmE and two MnmG subunits. It depends on FAD as a cofactor.

The protein localises to the cytoplasm. In terms of biological role, NAD-binding protein involved in the addition of a carboxymethylaminomethyl (cmnm) group at the wobble position (U34) of certain tRNAs, forming tRNA-cmnm(5)s(2)U34. The polypeptide is tRNA uridine 5-carboxymethylaminomethyl modification enzyme MnmG (Chlamydia trachomatis serovar A (strain ATCC VR-571B / DSM 19440 / HAR-13)).